The sequence spans 179 residues: Transcription factor 21 (179 aa).

A disordered region spans residues 20-86 (CDGIKLDPNK…KQVQRNAANA (67 aa)). Over residues 34–46 (SNDSNEESSTCDN) the composition is skewed to polar residues. Residues 50–64 (KKGRGTSGKRRKASS) are compositionally biased toward basic residues. Over residues 70 to 80 (GTINQEGKQVQ) the composition is skewed to polar residues. The bHLH domain maps to 79–131 (VQRNAANARERARMRVLSKAFSRLKTTLPWVPPDTKLSKLDTLRLASSYIAHL).

Efficient DNA binding requires dimerization with another bHLH protein. At the start of neurulation (stage 13), expressed in the pronephros. At tailbud stage (stage 25-28), expression is high in the anterior-most branchial arch and pronephric glomus. At stage 40, staining persists in the glomus and in the epicardium region of the heart, and at stage 42, expression is higher in the glomus than in the kidney tubule or duct. In adults, expression is highest in the rectum and the spleen, with significant expression in the duodenum, heart, kidney, lungs, pancreas, skin, liver and muscle.

Its subcellular location is the nucleus. In terms of biological role, involved in epithelial-mesenchymal interactions in kidney and lung morphogenesis that include epithelial differentiation and branching morphogenesis. The polypeptide is Transcription factor 21 (tcf21) (Xenopus laevis (African clawed frog)).